The chain runs to 299 residues: 4-hydroxybenzoate octaprenyltransferase (299 aa).

The next 8 helical transmembrane spans lie at 33-53 (VGFL…AGGV), 56-76 (WWTL…GCVI), 107-127 (LLMF…MNQL), 151-171 (LPQV…FAAI), 180-200 (WLLY…CAMV), 214-234 (AILF…LMLF), 247-267 (HTYW…FIIA), and 278-298 (AFMH…LATT).

This sequence belongs to the UbiA prenyltransferase family. Mg(2+) serves as cofactor.

Its subcellular location is the cell inner membrane. It catalyses the reaction all-trans-octaprenyl diphosphate + 4-hydroxybenzoate = 4-hydroxy-3-(all-trans-octaprenyl)benzoate + diphosphate. It functions in the pathway cofactor biosynthesis; ubiquinone biosynthesis. Functionally, catalyzes the prenylation of para-hydroxybenzoate (PHB) with an all-trans polyprenyl group. Mediates the second step in the final reaction sequence of ubiquinone-8 (UQ-8) biosynthesis, which is the condensation of the polyisoprenoid side chain with PHB, generating the first membrane-bound Q intermediate 3-octaprenyl-4-hydroxybenzoate. This is 4-hydroxybenzoate octaprenyltransferase from Xylella fastidiosa (strain 9a5c).